The chain runs to 451 residues: Lipase member H (451 aa).

The N-terminal stretch at 1–16 is a signal peptide; the sequence is MLRLCFLLSFMCLVKS. N-linked (GlcNAc...) asparagine glycosylation is present at Asn-66. Residue Ser-154 is the Nucleophile of the active site. Asp-178 serves as the catalytic Charge relay system. An intrachain disulfide couples Cys-233 to Cys-246. His-248 acts as the Charge relay system in catalysis. Cystine bridges form between Cys-270–Cys-281, Cys-284–Cys-292, and Cys-427–Cys-446.

The protein belongs to the AB hydrolase superfamily. Lipase family. As to quaternary structure, interacts with TTMP/C3orf52.

It is found in the secreted. Its subcellular location is the cell membrane. It catalyses the reaction 1-hexadecanoyl-2-(9Z-octadecenoyl)-sn-glycero-3-phosphate + H2O = 2-(9Z-octadecenoyl)-sn-glycero-3-phosphate + hexadecanoate + H(+). In terms of biological role, hydrolyzes specifically phosphatidic acid (PA) to produce 2-acyl lysophosphatidic acid (LPA; a potent bioactive lipid mediator) and fatty acid. Does not hydrolyze other phospholipids, like phosphatidylserine (PS), phosphatidylcholine (PC) and phosphatidylethanolamine (PE) or triacylglycerol (TG). The polypeptide is Lipase member H (Liph) (Rattus norvegicus (Rat)).